The sequence spans 615 residues: UvrABC system protein C (615 aa).

Residues 14-91 (TSPGCYIHKD…IKENKPKYNI (78 aa)) form the GIY-YIG domain. Residues 196–231 (NKIIDELKGKMAAAAQTMEFERAAEYRDLIQAIGTL) enclose the UVR domain.

It belongs to the UvrC family. As to quaternary structure, interacts with UvrB in an incision complex.

The protein localises to the cytoplasm. In terms of biological role, the UvrABC repair system catalyzes the recognition and processing of DNA lesions. UvrC both incises the 5' and 3' sides of the lesion. The N-terminal half is responsible for the 3' incision and the C-terminal half is responsible for the 5' incision. This Streptococcus pneumoniae (strain JJA) protein is UvrABC system protein C.